A 186-amino-acid polypeptide reads, in one-letter code: Ribosome-recycling factor (186 aa).

Residues 144-163 (EKDGVIGQDESRAQSERVQK) are disordered.

The protein belongs to the RRF family.

The protein resides in the cytoplasm. Responsible for the release of ribosomes from messenger RNA at the termination of protein biosynthesis. May increase the efficiency of translation by recycling ribosomes from one round of translation to another. The polypeptide is Ribosome-recycling factor (Rhizobium etli (strain CIAT 652)).